Here is a 313-residue protein sequence, read N- to C-terminus: Ribosomal RNA small subunit methyltransferase H (313 aa).

Residues Gly35–His37, Asp55, Phe79, Asp100, and Gln107 each bind S-adenosyl-L-methionine.

Belongs to the methyltransferase superfamily. RsmH family.

Its subcellular location is the cytoplasm. The enzyme catalyses cytidine(1402) in 16S rRNA + S-adenosyl-L-methionine = N(4)-methylcytidine(1402) in 16S rRNA + S-adenosyl-L-homocysteine + H(+). In terms of biological role, specifically methylates the N4 position of cytidine in position 1402 (C1402) of 16S rRNA. The sequence is that of Ribosomal RNA small subunit methyltransferase H from Burkholderia ambifaria (strain ATCC BAA-244 / DSM 16087 / CCUG 44356 / LMG 19182 / AMMD) (Burkholderia cepacia (strain AMMD)).